A 156-amino-acid chain; its full sequence is Arginine repressor (156 aa).

The protein belongs to the ArgR family.

Its subcellular location is the cytoplasm. It functions in the pathway amino-acid biosynthesis; L-arginine biosynthesis [regulation]. In terms of biological role, regulates arginine biosynthesis genes. This Shewanella loihica (strain ATCC BAA-1088 / PV-4) protein is Arginine repressor.